A 287-amino-acid chain; its full sequence is Protease HtpX (287 aa).

2 helical membrane passes run 4–24 and 37–57; these read VLLF…VFNI and VGLL…SLWI. Histidine 143 contributes to the Zn(2+) binding site. Glutamate 144 is an active-site residue. A Zn(2+)-binding site is contributed by histidine 147. Helical transmembrane passes span 158–178 and 194–214; these read LIQG…ASAI and GVVM…VMWF. Glutamate 219 is a binding site for Zn(2+).

This sequence belongs to the peptidase M48B family. The cofactor is Zn(2+).

The protein localises to the cell inner membrane. The chain is Protease HtpX from Idiomarina loihiensis (strain ATCC BAA-735 / DSM 15497 / L2-TR).